The primary structure comprises 254 residues: uncharacterized protein (254 aa).

This is an uncharacterized protein from Haemophilus influenzae (strain ATCC 51907 / DSM 11121 / KW20 / Rd).